Consider the following 218-residue polypeptide: Probable nicotinate-nucleotide adenylyltransferase (218 aa).

Belongs to the NadD family.

The catalysed reaction is nicotinate beta-D-ribonucleotide + ATP + H(+) = deamido-NAD(+) + diphosphate. It participates in cofactor biosynthesis; NAD(+) biosynthesis; deamido-NAD(+) from nicotinate D-ribonucleotide: step 1/1. In terms of biological role, catalyzes the reversible adenylation of nicotinate mononucleotide (NaMN) to nicotinic acid adenine dinucleotide (NaAD). The polypeptide is Probable nicotinate-nucleotide adenylyltransferase (Acidithiobacillus ferrooxidans (strain ATCC 23270 / DSM 14882 / CIP 104768 / NCIMB 8455) (Ferrobacillus ferrooxidans (strain ATCC 23270))).